A 360-amino-acid polypeptide reads, in one-letter code: UDP-N-acetylglucosamine--N-acetylmuramyl-(pentapeptide) pyrophosphoryl-undecaprenol N-acetylglucosamine transferase (360 aa).

UDP-N-acetyl-alpha-D-glucosamine is bound by residues 12 to 14, Ser-198, and Gln-289; that span reads TAG.

This sequence belongs to the glycosyltransferase 28 family. MurG subfamily.

It is found in the cell membrane. The catalysed reaction is Mur2Ac(oyl-L-Ala-gamma-D-Glu-L-Lys-D-Ala-D-Ala)-di-trans,octa-cis-undecaprenyl diphosphate + UDP-N-acetyl-alpha-D-glucosamine = beta-D-GlcNAc-(1-&gt;4)-Mur2Ac(oyl-L-Ala-gamma-D-Glu-L-Lys-D-Ala-D-Ala)-di-trans,octa-cis-undecaprenyl diphosphate + UDP + H(+). It participates in cell wall biogenesis; peptidoglycan biosynthesis. In terms of biological role, cell wall formation. Catalyzes the transfer of a GlcNAc subunit on undecaprenyl-pyrophosphoryl-MurNAc-pentapeptide (lipid intermediate I) to form undecaprenyl-pyrophosphoryl-MurNAc-(pentapeptide)GlcNAc (lipid intermediate II). The protein is UDP-N-acetylglucosamine--N-acetylmuramyl-(pentapeptide) pyrophosphoryl-undecaprenol N-acetylglucosamine transferase of Streptococcus equi subsp. equi (strain 4047).